Consider the following 323-residue polypeptide: tRNA dimethylallyltransferase (323 aa).

13-20 provides a ligand contact to ATP; that stretch reads GPTASGKT. 15–20 serves as a coordination point for substrate; the sequence is TASGKT. 4 interaction with substrate tRNA regions span residues 42–45, 166–170, 251–256, and 284–291; these read DSAL, QRIQR, RCVGYR, and KRQITWLR.

It belongs to the IPP transferase family. In terms of assembly, monomer. Requires Mg(2+) as cofactor.

The enzyme catalyses adenosine(37) in tRNA + dimethylallyl diphosphate = N(6)-dimethylallyladenosine(37) in tRNA + diphosphate. In terms of biological role, catalyzes the transfer of a dimethylallyl group onto the adenine at position 37 in tRNAs that read codons beginning with uridine, leading to the formation of N6-(dimethylallyl)adenosine (i(6)A). In Acidovorax ebreus (strain TPSY) (Diaphorobacter sp. (strain TPSY)), this protein is tRNA dimethylallyltransferase.